A 103-amino-acid polypeptide reads, in one-letter code: Co-chaperonin GroES (103 aa).

The protein belongs to the GroES chaperonin family. Heptamer of 7 subunits arranged in a ring. Interacts with the chaperonin GroEL.

It localises to the cytoplasm. In terms of biological role, together with the chaperonin GroEL, plays an essential role in assisting protein folding. The GroEL-GroES system forms a nano-cage that allows encapsulation of the non-native substrate proteins and provides a physical environment optimized to promote and accelerate protein folding. GroES binds to the apical surface of the GroEL ring, thereby capping the opening of the GroEL channel. The sequence is that of Co-chaperonin GroES from Crocosphaera subtropica (strain ATCC 51142 / BH68) (Cyanothece sp. (strain ATCC 51142)).